The chain runs to 125 residues: Small ribosomal subunit protein uS12 (125 aa).

The interval Arg-9–Arg-31 is disordered. Residue Asp-89 is modified to 3-methylthioaspartic acid.

It belongs to the universal ribosomal protein uS12 family. As to quaternary structure, part of the 30S ribosomal subunit. Contacts proteins S8 and S17. May interact with IF1 in the 30S initiation complex.

With S4 and S5 plays an important role in translational accuracy. Its function is as follows. Interacts with and stabilizes bases of the 16S rRNA that are involved in tRNA selection in the A site and with the mRNA backbone. Located at the interface of the 30S and 50S subunits, it traverses the body of the 30S subunit contacting proteins on the other side and probably holding the rRNA structure together. The combined cluster of proteins S8, S12 and S17 appears to hold together the shoulder and platform of the 30S subunit. This chain is Small ribosomal subunit protein uS12, found in Verminephrobacter eiseniae (strain EF01-2).